The sequence spans 536 residues: MISRQSSVRGVSRGFSSGSAVAGGVKRVAFSSASMSGGAGRCSSGGFGSRSLYNLGGHKSISMSVAGSCQGGGYGGAGGFGVGGYGAGFGAGGFGGGFGGSFNGRGGPGFPVCPAGGIQEVTINQSLLTPLQVEIDPEIQKIRTAEREQIKTLNNKFASFIDKVRFLEQQNKVLETKWNLLQQQTTTTSPRNLDPFFETYINALRKNLDTLSNDKGRLQSELKLMQDSVEDFKTKYEEEINKRTAAENDFVVLKKDVDAAYMIKVELEAKMESLKDEINFMRVLYEAELSQMQTHVSDTSVVLSMDNNRNLDLDGIIAEVRAQYEEIARKSKAEVESWYQIKVQQLQMSADQHGDSLKSTKNEISELNRMIQRIRSEIENIKKQTLQASVADAEQRGELALKDAYTKRADLETALQKAKEDLARLMRDYQELMNVKLALDVEIATYRKLLEGEECRMSGECKSAVSISVVGGSASIGGSGGIGLGLGSGFGSGSCSGSGFGFGGGIYGSSGTKITSSATITKRSPRTRQDPDGLQP.

The segment at 1 to 145 (MISRQSSVRG…DPEIQKIRTA (145 aa)) is head. The residue at position 13 (R13) is an Omega-N-methylarginine. Residues 146–181 (EREQIKTLNNKFASFIDKVRFLEQQNKVLETKWNLL) are coil 1A. Residues 146-457 (EREQIKTLNN…KLLEGEECRM (312 aa)) form the IF rod domain. The tract at residues 182–200 (QQQTTTTSPRNLDPFFETY) is linker 1. Positions 201–293 (INALRKNLDT…LYEAELSQMQ (93 aa)) are coil 1B. A linker 12 region spans residues 294-316 (THVSDTSVVLSMDNNRNLDLDGI). The tract at residues 317-454 (IAEVRAQYEE…TYRKLLEGEE (138 aa)) is coil 2. The interval 455–524 (CRMSGECKSA…TSSATITKRS (70 aa)) is tail. The tract at residues 515–536 (TSSATITKRSPRTRQDPDGLQP) is disordered. The span at 527 to 536 (TRQDPDGLQP) shows a compositional bias: basic and acidic residues.

Belongs to the intermediate filament family. In terms of assembly, heterotetramer of two type I and two type II keratins. keratin-4 is generally associated with keratin-13.

This Rattus norvegicus (Rat) protein is Keratin, type II cytoskeletal 4.